We begin with the raw amino-acid sequence, 506 residues long: ATP synthase subunit alpha (506 aa).

169–176 contacts ATP; that stretch reads GDRQTGKT.

The protein belongs to the ATPase alpha/beta chains family. As to quaternary structure, F-type ATPases have 2 components, CF(1) - the catalytic core - and CF(0) - the membrane proton channel. CF(1) has five subunits: alpha(3), beta(3), gamma(1), delta(1), epsilon(1). CF(0) has three main subunits: a(1), b(2) and c(9-12). The alpha and beta chains form an alternating ring which encloses part of the gamma chain. CF(1) is attached to CF(0) by a central stalk formed by the gamma and epsilon chains, while a peripheral stalk is formed by the delta and b chains.

It localises to the cell membrane. The catalysed reaction is ATP + H2O + 4 H(+)(in) = ADP + phosphate + 5 H(+)(out). Produces ATP from ADP in the presence of a proton gradient across the membrane. The alpha chain is a regulatory subunit. The sequence is that of ATP synthase subunit alpha from Acetivibrio thermocellus (strain ATCC 27405 / DSM 1237 / JCM 9322 / NBRC 103400 / NCIMB 10682 / NRRL B-4536 / VPI 7372) (Clostridium thermocellum).